The following is a 276-amino-acid chain: Pyrroline-5-carboxylate reductase (276 aa).

It belongs to the pyrroline-5-carboxylate reductase family.

It localises to the cytoplasm. It carries out the reaction L-proline + NADP(+) = (S)-1-pyrroline-5-carboxylate + NADPH + 2 H(+). It catalyses the reaction L-proline + NAD(+) = (S)-1-pyrroline-5-carboxylate + NADH + 2 H(+). It functions in the pathway amino-acid biosynthesis; L-proline biosynthesis; L-proline from L-glutamate 5-semialdehyde: step 1/1. In Arabidopsis thaliana (Mouse-ear cress), this protein is Pyrroline-5-carboxylate reductase (PROC1).